Consider the following 794-residue polypeptide: Elongator complex protein 2 (794 aa).

WD repeat units lie at residues 55-93 (EHTK…TTKS), 98-140 (GHTS…YVCF), 147-188 (DGFC…AGEG), 203-244 (GHED…KEQM), 286-328 (GHEG…IWLE), 337-376 (GNSV…PQLW), 384-423 (GHYG…GANP), 433-472 (IHGY…ENFR), 557-601 (GHGY…QIQK), 604-643 (GHQL…VSYQ), 654-693 (VHTR…KESS), 705-751 (LKNE…WKLL), and 759-794 (AHHL…IKLT).

The protein belongs to the WD repeat ELP2 family. In terms of assembly, component of the elongator complex composed of Elp1, Elp2, Elp3, Elp4, Elp5 and Elp6. The elongator complex associates with and stabilizes microtubules; efficient interaction requires the full complex.

The protein localises to the cytoplasm. The protein resides in the nucleus. It localises to the cytoskeleton. Its subcellular location is the spindle. It functions in the pathway tRNA modification; 5-methoxycarbonylmethyl-2-thiouridine-tRNA biosynthesis. Functionally, component of the elongator complex, which is required for multiple tRNA modifications, including mcm5U (5-methoxycarbonylmethyl uridine), mcm5s2U (5-methoxycarbonylmethyl-2-thiouridine), and ncm5U (5-carbamoylmethyl uridine). The elongator complex catalyzes the formation of carboxymethyluridine in the wobble base at position 34 in tRNAs. Binding by the elongator complex stabilizes microtubules and promotes their growth. This induces central spindle asymmetry, promoting polarized signaling endosome trafficking during asymmetric cell division and cell fate assignation of sensory organ precursor cells. Involved in the regulation of the STAT pathway. In Drosophila melanogaster (Fruit fly), this protein is Elongator complex protein 2.